The sequence spans 142 residues: Heat shock protein HSP.16.4 (142 aa).

The region spanning 27–142 is the sHSP domain; it reads NLFNDLKSNL…KEIKTSIPIE (116 aa).

The protein belongs to the small heat shock protein (HSP20) family.

The protein localises to the cytoplasm. This is Heat shock protein HSP.16.4 from Streptococcus thermophilus.